We begin with the raw amino-acid sequence, 233 residues long: Phosphoglycolate phosphatase (233 aa).

Residue D9 is the Nucleophile of the active site. Residues D9 and D11 each coordinate Mg(2+). K154 is a binding site for substrate. The Mg(2+) site is built by D177 and D181.

It belongs to the archaeal SPP-like hydrolase family. Requires Mg(2+) as cofactor.

The enzyme catalyses 2-phosphoglycolate + H2O = glycolate + phosphate. Functionally, catalyzes the dephosphorylation of 2-phosphoglycolate. The chain is Phosphoglycolate phosphatase from Pyrococcus abyssi (strain GE5 / Orsay).